The sequence spans 321 residues: D-alanine--D-alanine ligase (321 aa).

The 195-residue stretch at 121-315 (RSCFLKNNIN…FTNLIEEIIK (195 aa)) folds into the ATP-grasp domain. Residue 148–199 (MKRPYVIKPLKQGSSIGVEVIFEEDDFHFIDYDFPYGEDIIIEQYIQGQELQ) participates in ATP binding. Glutamate 268, glutamate 282, and asparagine 284 together coordinate Mg(2+).

The protein belongs to the D-alanine--D-alanine ligase family. Mg(2+) serves as cofactor. Mn(2+) is required as a cofactor.

The protein resides in the cytoplasm. The catalysed reaction is 2 D-alanine + ATP = D-alanyl-D-alanine + ADP + phosphate + H(+). It functions in the pathway cell wall biogenesis; peptidoglycan biosynthesis. Cell wall formation. The polypeptide is D-alanine--D-alanine ligase (Rickettsia typhi (strain ATCC VR-144 / Wilmington)).